A 290-amino-acid polypeptide reads, in one-letter code: Bifunctional protein FolD (290 aa).

NADP(+) contacts are provided by residues 166–168 (GQS), Ser-191, and Ile-232.

The protein belongs to the tetrahydrofolate dehydrogenase/cyclohydrolase family. As to quaternary structure, homodimer.

The enzyme catalyses (6R)-5,10-methylene-5,6,7,8-tetrahydrofolate + NADP(+) = (6R)-5,10-methenyltetrahydrofolate + NADPH. It carries out the reaction (6R)-5,10-methenyltetrahydrofolate + H2O = (6R)-10-formyltetrahydrofolate + H(+). The protein operates within one-carbon metabolism; tetrahydrofolate interconversion. Catalyzes the oxidation of 5,10-methylenetetrahydrofolate to 5,10-methenyltetrahydrofolate and then the hydrolysis of 5,10-methenyltetrahydrofolate to 10-formyltetrahydrofolate. In Halorhodospira halophila (strain DSM 244 / SL1) (Ectothiorhodospira halophila (strain DSM 244 / SL1)), this protein is Bifunctional protein FolD.